Reading from the N-terminus, the 335-residue chain is Putative SWIB domain-containing protein R508 (335 aa).

Over residues 1–12 the composition is skewed to basic residues; it reads MSKRVTSSKKSK. The tract at residues 1–182 is disordered; the sequence is MSKRVTSSKK…NKKSPKKLLN (182 aa). Positions 24-33 are enriched in low complexity; the sequence is KNLSKTSKSV. Over residues 60–75 the composition is skewed to polar residues; it reads NIGGSKSSRTYNSEGS. Positions 83–109 are enriched in basic and acidic residues; sequence SSKDSKVIKKNKQKVESSDSEKHSENK. Positions 110 to 126 are enriched in basic residues; that stretch reads SHKKSSKSSSISRKKPI. Positions 163–173 are enriched in basic and acidic residues; it reads KGEDNNDEKQN. The stretch at 181-217 forms a coiled coil; sequence LNEKKISSESFDDKLNELREELRENYIRQKKIMNDIK. The region spanning 244–326 is the SWIB/MDM2 domain; the sequence is GFNKPQTVPQ…QTWLKKVYNE (83 aa).

The polypeptide is Putative SWIB domain-containing protein R508 (Acanthamoeba polyphaga mimivirus (APMV)).